The primary structure comprises 335 residues: MKFSKGIHAIDSHTMGEPTRIVVGGIPQINGETMADKKKYLEDNLDYVRTALMHEPRGHNDMFGSIITSSNNKEADFGIIFMDGGGYLNMCGHGSIGAATVAVETGMVEMVEPVTNINMEAPAGLIKAKVMVENEKVKEVSITNVPSFLYMEDAKLEVPSLNKTITFDISFGGSFFAIIHAKELGVKVETSQVDVLKKLGIEIRDLINEKIKVQHPELEHIKTVDLVEIYDEPSNPEATYKNVVIFGQGQVDRSPCGTGTSAKLATLYKKGHLKIDEKFVYESITGTMFKGRVLEETKVGEFDAIIPEITGGAYITGFNHFVIDPEDPLKYGFTV.

C91 functions as the Proton acceptor in the catalytic mechanism. Catalysis depends on C256, which acts as the Proton donor.

This sequence belongs to the proline racemase family.

The catalysed reaction is L-proline = D-proline. Its activity is regulated as follows. Inhibited by pyrrole-2-carboxylate in vitro. Functionally, catalyzes the reversible interconversion of L- and D-proline. Likely functions as the proline racemase necessary for D-proline generation in order to discriminate it from the L-proline used for protein synthesis. This is Proline racemase from Acetoanaerobium sticklandii (strain ATCC 12662 / DSM 519 / JCM 1433 / CCUG 9281 / NCIMB 10654 / HF) (Clostridium sticklandii).